The chain runs to 252 residues: Triosephosphate isomerase (252 aa).

9 to 11 (NWK) serves as a coordination point for substrate. The active-site Electrophile is histidine 100. Glutamate 171 (proton acceptor) is an active-site residue. Residues glycine 177, serine 216, and 237–238 (GG) each bind substrate.

Belongs to the triosephosphate isomerase family. Homodimer.

It is found in the cytoplasm. It carries out the reaction D-glyceraldehyde 3-phosphate = dihydroxyacetone phosphate. Its pathway is carbohydrate biosynthesis; gluconeogenesis. The protein operates within carbohydrate degradation; glycolysis; D-glyceraldehyde 3-phosphate from glycerone phosphate: step 1/1. In terms of biological role, involved in the gluconeogenesis. Catalyzes stereospecifically the conversion of dihydroxyacetone phosphate (DHAP) to D-glyceraldehyde-3-phosphate (G3P). The chain is Triosephosphate isomerase from Polynucleobacter necessarius subsp. necessarius (strain STIR1).